Here is a 750-residue protein sequence, read N- to C-terminus: Polyribonucleotide nucleotidyltransferase (750 aa).

2 residues coordinate Mg(2+): Asp519 and Asp525. In terms of domain architecture, KH spans 585–644; sequence PRVIAVKIPVDKIGEVIGPKGKMINQIQEDTGADISIEDDGTVYIGATNGPSADAARSAI. The S1 motif domain maps to 656–728; that stretch reads GERYLGTVVK…DRGKLSLSPV (73 aa). The interval 725–750 is disordered; that stretch reads LSPVVAEEEGAASEDAPAEAAEESAE. Over residues 730-750 the composition is skewed to acidic residues; the sequence is AEEEGAASEDAPAEAAEESAE.

This sequence belongs to the polyribonucleotide nucleotidyltransferase family. The cofactor is Mg(2+).

Its subcellular location is the cytoplasm. The catalysed reaction is RNA(n+1) + phosphate = RNA(n) + a ribonucleoside 5'-diphosphate. Functionally, involved in mRNA degradation. Catalyzes the phosphorolysis of single-stranded polyribonucleotides processively in the 3'- to 5'-direction. This chain is Polyribonucleotide nucleotidyltransferase, found in Paenarthrobacter aurescens (strain TC1).